The following is a 494-amino-acid chain: Alpha-amylase 2 (494 aa).

The signal sequence occupies residues 1 to 18; it reads MFLAKSIVCLALLAVANA. A disulfide bridge links cysteine 46 with cysteine 102. Ca(2+) is bound by residues asparagine 116, arginine 165, and aspartate 174. Cysteine 153 and cysteine 167 are joined by a disulfide. Arginine 202 provides a ligand contact to chloride. Catalysis depends on aspartate 204, which acts as the Nucleophile. Residue histidine 208 coordinates Ca(2+). Glutamate 241 functions as the Proton donor in the catalytic mechanism. Asparagine 304 and arginine 343 together coordinate chloride. The interval 350–370 is disordered; that stretch reads FTDTDQGPPTTDGQNIASPSF. Positions 351–363 are enriched in low complexity; it reads TDTDQGPPTTDGQ. 2 disulfides stabilise this stretch: cysteine 376-cysteine 382 and cysteine 448-cysteine 460.

The protein belongs to the glycosyl hydrolase 13 family. Monomer. The cofactor is Ca(2+). Requires chloride as cofactor.

It carries out the reaction Endohydrolysis of (1-&gt;4)-alpha-D-glucosidic linkages in polysaccharides containing three or more (1-&gt;4)-alpha-linked D-glucose units.. In Drosophila ananassae (Fruit fly), this protein is Alpha-amylase 2 (Amy58).